A 73-amino-acid polypeptide reads, in one-letter code: DNA-directed RNA polymerase subunit omega (73 aa).

Belongs to the RNA polymerase subunit omega family. The RNAP catalytic core consists of 2 alpha, 1 beta, 1 beta' and 1 omega subunit. When a sigma factor is associated with the core the holoenzyme is formed, which can initiate transcription.

It carries out the reaction RNA(n) + a ribonucleoside 5'-triphosphate = RNA(n+1) + diphosphate. Functionally, promotes RNA polymerase assembly. Latches the N- and C-terminal regions of the beta' subunit thereby facilitating its interaction with the beta and alpha subunits. The chain is DNA-directed RNA polymerase subunit omega from Clostridium novyi (strain NT).